The following is a 279-amino-acid chain: NAD kinase (279 aa).

Residue Asp57 is the Proton acceptor of the active site. NAD(+) is bound by residues 57 to 58 (DG), 133 to 134 (NE), Arg159, Asp161, and 172 to 177 (TAYNKS).

It belongs to the NAD kinase family. Requires a divalent metal cation as cofactor.

The protein resides in the cytoplasm. The catalysed reaction is NAD(+) + ATP = ADP + NADP(+) + H(+). Its function is as follows. Involved in the regulation of the intracellular balance of NAD and NADP, and is a key enzyme in the biosynthesis of NADP. Catalyzes specifically the phosphorylation on 2'-hydroxyl of the adenosine moiety of NAD to yield NADP. The sequence is that of NAD kinase from Streptococcus pyogenes serotype M12 (strain MGAS2096).